Here is an 80-residue protein sequence, read N- to C-terminus: Exodeoxyribonuclease 7 small subunit (80 aa).

This sequence belongs to the XseB family. As to quaternary structure, heterooligomer composed of large and small subunits.

The protein resides in the cytoplasm. It carries out the reaction Exonucleolytic cleavage in either 5'- to 3'- or 3'- to 5'-direction to yield nucleoside 5'-phosphates.. Functionally, bidirectionally degrades single-stranded DNA into large acid-insoluble oligonucleotides, which are then degraded further into small acid-soluble oligonucleotides. The chain is Exodeoxyribonuclease 7 small subunit from Shigella sonnei (strain Ss046).